Here is a 422-residue protein sequence, read N- to C-terminus: Ornithine decarboxylase (422 aa).

An N6-(pyridoxal phosphate)lysine modification is found at lysine 71. Pyridoxal 5'-phosphate is bound by residues serine 203, glycine 240, and 275 to 278 (EPGR). 331 to 332 (FD) is a binding site for substrate. Cysteine 359 acts as the Proton donor; shared with dimeric partner in catalysis. Residue aspartate 360 coordinates substrate. Pyridoxal 5'-phosphate is bound at residue tyrosine 388.

This sequence belongs to the Orn/Lys/Arg decarboxylase class-II family. As to quaternary structure, homodimer. Only the dimer is catalytically active, as the active sites are constructed of residues from both monomers. It depends on pyridoxal 5'-phosphate as a cofactor.

It catalyses the reaction L-ornithine + H(+) = putrescine + CO2. The protein operates within amine and polyamine biosynthesis; putrescine biosynthesis via L-ornithine pathway; putrescine from L-ornithine: step 1/1. Its activity is regulated as follows. Inhibited by antizyme (AZ) in response to polyamine levels. AZ inhibits the assembly of the functional homodimer by binding to ODC monomers and targeting them for ubiquitin-independent proteolytic destruction by the 26S proteasome. In terms of biological role, catalyzes the first and rate-limiting step of polyamine biosynthesis that converts ornithine into putrescine, which is the precursor for the polyamines, spermidine and spermine. Polyamines are essential for cell proliferation and are implicated in cellular processes, ranging from DNA replication to apoptosis. The sequence is that of Ornithine decarboxylase from Caenorhabditis elegans.